A 246-amino-acid chain; its full sequence is Short chain dehydrogenase/reductase dmxR12 (246 aa).

The NADP(+) site is built by Ile-15, Ser-34, Lys-125, and Lys-164. The active-site Lowers pKa of active site Tyr is the Lys-164.

The protein belongs to the short-chain dehydrogenases/reductases (SDR) family.

The protein operates within secondary metabolite biosynthesis. Short chain dehydrogenase/reductase; part of the gene cluster that mediates the biosynthesis of the dimeric xanthones cryptosporioptides. The pathway begins with the synthesis of atrochrysone thioester by the polyketide synthase dmx-nrPKS. The atrochrysone carboxyl ACP thioesterase dmxR1 then breaks the thioester bond and releases the atrochrysone carboxylic acid from dmx-nrPKS. Atrochrysone carboxylic acid is decarboxylated by the decarboxylase dmxR15, and oxidized by the anthrone oxygenase dmxR16 to yield emodin. Emodin is then reduced to emodin hydroquinone by the oxidoreductase dmxR7. A-ring reduction by the short chain dehydrogenase dmxR18, dehydration by the scytalone dehydratase-like protein dmxR17 and probable spontaneous re-oxidation, results in overall deoxygenation to chrysophanol. Baeyer-Villiger oxidation by the Baeyer-Villiger monooxygenase (BVMO) dmxR6 then yields monodictylactone in equilibrium with monodictyphenone. In the case of the cryptosporioptides biosynthesis, monodictylactone is reduced at C-12 to an alcohol (by the short chain dehydrogenases dmxR12 or dmxR8) and hydroxylated at C-5 by dmxR9, yielding the electron-rich aromatic which could eliminate H(2)O to form the ortho-quinonemethide, followed by tautomerisation to paraquinone and complete the formal reduction to produce the 10-methylgroup. Conjugate addition of C-4a-OH to the resulting paraquinone by the monooxygenase dmxR10 then gives cyclohexadienone, which is then reduced at C-5 by the short chain dehydrogenase dmxR3 to give the dihydroxanthone. The 6,7-epoxide in the cryptosporioptides could be introduced by the cytochrome P450 monooxygenase dmxL3. The highly reducing PKS dmxL2 manufactures butyrate, which is further carboxylated by dmxL1 to form ethylmalonate. It is not yet clear whether the carboxylation occurs while the butyrate is attached to the ACP of dmxL2, but this unusual fungal metabolite could then be esterified to O-5 by the O-acetyltransferase dmxR13. Finally, dimerization performed by dmxR5 gives the observed dimers cryptosporioptides A, B and C as the final products of the pathway. This is Short chain dehydrogenase/reductase dmxR12 from Cryptosporiopsis sp. (strain 8999).